A 741-amino-acid polypeptide reads, in one-letter code: Fibrinogen alpha chain (741 aa).

The first 18 residues, 1 to 18, serve as a signal peptide directing secretion; the sequence is MIPVTILCVLLCLNLAWA. Gln19 is subject to Pyrrolidone carboxylic acid. A coiled-coil region spans residues 67 to 506; sequence CCRMQGIIDD…STRRSYNGKD (440 aa). The interval 270 to 307 is disordered; it reads VAEARGDSSPSHTGKLITSSHRRESPSLVDKTSSASSV. Positions 277–288 are enriched in polar residues; that stretch reads SSPSHTGKLITS. An intrachain disulfide couples Cys310 to Cys341. Composition is skewed to low complexity over residues 381–398 and 435–449; these read STSS…HVTG and SASH…SSSS. The segment at 381–510 is disordered; the sequence is STSSRHSIGS…SYNGKDCDDI (130 aa). Polar residues predominate over residues 450 to 459; it reads FNKGGSTFET. The 242-residue stretch at 498 to 739 folds into the Fibrinogen C-terminal domain; it reads TRRSYNGKDC…VVRMKIRPLE (242 aa). Asp666, Asp668, Trp670, and Glu672 together coordinate Ca(2+). Cysteines 674 and 687 form a disulfide.

Heterohexamer; disulfide linked. Contains 2 sets of 3 non-identical chains (alpha, beta and gamma). The 2 heterotrimers are in head to head conformation with the N-termini in a small central domain. Post-translationally, conversion of fibrinogen to fibrin is triggered by thrombin, which cleaves fibrinopeptides A and B from alpha and beta chains, and thus exposes the N-terminal polymerization sites responsible for the formation of the soft clot. The soft clot is converted into the hard clot by factor XIIIA which catalyzes the epsilon-(gamma-glutamyl)lysine cross-linking between gamma chains (stronger) and between alpha chains (weaker) of different monomers. In terms of processing, forms F13A-mediated cross-links between a glutamine and the epsilon-amino group of a lysine residue, forming fibronectin-fibrinogen heteropolymers.

It localises to the secreted. In terms of biological role, cleaved by the protease thrombin to yield monomers which, together with fibrinogen beta (FGB) and fibrinogen gamma (FGG), polymerize to form an insoluble fibrin matrix. Fibrin has a major function in hemostasis as one of the primary components of blood clots. The polypeptide is Fibrinogen alpha chain (FGA) (Gallus gallus (Chicken)).